A 421-amino-acid polypeptide reads, in one-letter code: Tyrosine--tRNA ligase (421 aa).

Tyr-36 serves as a coordination point for L-tyrosine. The short motif at 41–50 is the 'HIGH' region element; sequence PTADSLHIGH. Residues Tyr-170 and Gln-174 each contribute to the L-tyrosine site. Positions 231-235 match the 'KMSKS' region motif; that stretch reads KFGKS. Residue Lys-234 coordinates ATP. The S4 RNA-binding domain occupies 353 to 420; sequence TNIVEALIET…KKKYFMVNYQ (68 aa).

This sequence belongs to the class-I aminoacyl-tRNA synthetase family. TyrS type 1 subfamily. As to quaternary structure, homodimer.

Its subcellular location is the cytoplasm. The enzyme catalyses tRNA(Tyr) + L-tyrosine + ATP = L-tyrosyl-tRNA(Tyr) + AMP + diphosphate + H(+). Catalyzes the attachment of tyrosine to tRNA(Tyr) in a two-step reaction: tyrosine is first activated by ATP to form Tyr-AMP and then transferred to the acceptor end of tRNA(Tyr). This Staphylococcus epidermidis (strain ATCC 35984 / DSM 28319 / BCRC 17069 / CCUG 31568 / BM 3577 / RP62A) protein is Tyrosine--tRNA ligase.